A 257-amino-acid polypeptide reads, in one-letter code: Imidazole glycerol phosphate synthase subunit HisF (257 aa).

Active-site residues include Asp11 and Asp130.

The protein belongs to the HisA/HisF family. As to quaternary structure, heterodimer of HisH and HisF.

It localises to the cytoplasm. The catalysed reaction is 5-[(5-phospho-1-deoxy-D-ribulos-1-ylimino)methylamino]-1-(5-phospho-beta-D-ribosyl)imidazole-4-carboxamide + L-glutamine = D-erythro-1-(imidazol-4-yl)glycerol 3-phosphate + 5-amino-1-(5-phospho-beta-D-ribosyl)imidazole-4-carboxamide + L-glutamate + H(+). The protein operates within amino-acid biosynthesis; L-histidine biosynthesis; L-histidine from 5-phospho-alpha-D-ribose 1-diphosphate: step 5/9. In terms of biological role, IGPS catalyzes the conversion of PRFAR and glutamine to IGP, AICAR and glutamate. The HisF subunit catalyzes the cyclization activity that produces IGP and AICAR from PRFAR using the ammonia provided by the HisH subunit. This Shewanella baltica (strain OS223) protein is Imidazole glycerol phosphate synthase subunit HisF.